Here is a 187-residue protein sequence, read N- to C-terminus: ATP synthase subunit delta (187 aa).

It belongs to the ATPase delta chain family. As to quaternary structure, F-type ATPases have 2 components, F(1) - the catalytic core - and F(0) - the membrane proton channel. F(1) has five subunits: alpha(3), beta(3), gamma(1), delta(1), epsilon(1). F(0) has three main subunits: a(1), b(2) and c(10-14). The alpha and beta chains form an alternating ring which encloses part of the gamma chain. F(1) is attached to F(0) by a central stalk formed by the gamma and epsilon chains, while a peripheral stalk is formed by the delta and b chains.

It localises to the cell inner membrane. F(1)F(0) ATP synthase produces ATP from ADP in the presence of a proton or sodium gradient. F-type ATPases consist of two structural domains, F(1) containing the extramembraneous catalytic core and F(0) containing the membrane proton channel, linked together by a central stalk and a peripheral stalk. During catalysis, ATP synthesis in the catalytic domain of F(1) is coupled via a rotary mechanism of the central stalk subunits to proton translocation. In terms of biological role, this protein is part of the stalk that links CF(0) to CF(1). It either transmits conformational changes from CF(0) to CF(1) or is implicated in proton conduction. The chain is ATP synthase subunit delta from Leptospira biflexa serovar Patoc (strain Patoc 1 / Ames).